A 148-amino-acid polypeptide reads, in one-letter code: Large ribosomal subunit protein uL11 (148 aa).

Residues 89–108 (EKKKGSGAHKPGKEKVGQVT) are disordered.

This sequence belongs to the universal ribosomal protein uL11 family. As to quaternary structure, part of the ribosomal stalk of the 50S ribosomal subunit. Interacts with L10 and the large rRNA to form the base of the stalk. L10 forms an elongated spine to which L12 dimers bind in a sequential fashion forming a multimeric L10(L12)X complex. Post-translationally, one or more lysine residues are methylated.

Its function is as follows. Forms part of the ribosomal stalk which helps the ribosome interact with GTP-bound translation factors. The chain is Large ribosomal subunit protein uL11 from Anaeromyxobacter dehalogenans (strain 2CP-1 / ATCC BAA-258).